A 155-amino-acid chain; its full sequence is Ribosome maturation factor RimP (155 aa).

This sequence belongs to the RimP family.

It is found in the cytoplasm. Required for maturation of 30S ribosomal subunits. In Staphylococcus haemolyticus (strain JCSC1435), this protein is Ribosome maturation factor RimP.